A 261-amino-acid polypeptide reads, in one-letter code: Imidazole glycerol phosphate synthase subunit HisF (261 aa).

Residues D12 and D131 contribute to the active site.

The protein belongs to the HisA/HisF family. Heterodimer of HisH and HisF.

It is found in the cytoplasm. It catalyses the reaction 5-[(5-phospho-1-deoxy-D-ribulos-1-ylimino)methylamino]-1-(5-phospho-beta-D-ribosyl)imidazole-4-carboxamide + L-glutamine = D-erythro-1-(imidazol-4-yl)glycerol 3-phosphate + 5-amino-1-(5-phospho-beta-D-ribosyl)imidazole-4-carboxamide + L-glutamate + H(+). Its pathway is amino-acid biosynthesis; L-histidine biosynthesis; L-histidine from 5-phospho-alpha-D-ribose 1-diphosphate: step 5/9. IGPS catalyzes the conversion of PRFAR and glutamine to IGP, AICAR and glutamate. The HisF subunit catalyzes the cyclization activity that produces IGP and AICAR from PRFAR using the ammonia provided by the HisH subunit. This Brucella abortus (strain S19) protein is Imidazole glycerol phosphate synthase subunit HisF.